The following is a 379-amino-acid chain: MSQNASVGIVMPQKIPFEMPLVLENGKTLPRFDLMIETYGELNAEKNNAVLICHALSGNHHVAGRHSAEDKYTGWWDNMVGPGKPIDTERFFVVGLNNLGGCDGSSGPLSINPETGREYGADFPVVTVKDWVKSQAALADYLGIEQWAAIVGGSLGGMQALQWTISYPERVRHALVIASAPKLSTQNIAFNDVARQAILTDPDFNEGHYRSHNTVPARGLRIARMMGHITYLAEDGLGKKFGRDLRSNGYQYGFGVEFEVESYLRYQGDKFVGRFDANTYLLMTKALDYFDPAADFGDSLTRALQNVKAKFFVASFSTDWRFAPERSHELVKALIAAQKSVQYIEVKSAHGHDAFLMEDEAYMRAVAAYMNNVYKECQQ.

Residues 48-357 (NAVLICHALS…SAHGHDAFLM (310 aa)) form the AB hydrolase-1 domain. Residue serine 154 is the Nucleophile of the active site. Arginine 224 is a substrate binding site. Residues aspartate 319 and histidine 352 contribute to the active site. Residue aspartate 353 coordinates substrate.

Belongs to the AB hydrolase superfamily. MetX family. Homodimer.

The protein localises to the cytoplasm. The catalysed reaction is L-homoserine + succinyl-CoA = O-succinyl-L-homoserine + CoA. It participates in amino-acid biosynthesis; L-methionine biosynthesis via de novo pathway; O-succinyl-L-homoserine from L-homoserine: step 1/1. Functionally, transfers a succinyl group from succinyl-CoA to L-homoserine, forming succinyl-L-homoserine. This Neisseria meningitidis serogroup B (strain ATCC BAA-335 / MC58) protein is Homoserine O-succinyltransferase.